A 307-amino-acid chain; its full sequence is 4-hydroxythreonine-4-phosphate dehydrogenase (307 aa).

Positions 126 and 127 each coordinate substrate. Positions 156, 195, and 251 each coordinate a divalent metal cation. Positions 259, 268, and 277 each coordinate substrate.

Belongs to the PdxA family. As to quaternary structure, homodimer. The cofactor is Zn(2+). It depends on Mg(2+) as a cofactor. Co(2+) is required as a cofactor.

It localises to the cytoplasm. The enzyme catalyses 4-(phosphooxy)-L-threonine + NAD(+) = 3-amino-2-oxopropyl phosphate + CO2 + NADH. The protein operates within cofactor biosynthesis; pyridoxine 5'-phosphate biosynthesis; pyridoxine 5'-phosphate from D-erythrose 4-phosphate: step 4/5. In terms of biological role, catalyzes the NAD(P)-dependent oxidation of 4-(phosphooxy)-L-threonine (HTP) into 2-amino-3-oxo-4-(phosphooxy)butyric acid which spontaneously decarboxylates to form 3-amino-2-oxopropyl phosphate (AHAP). The sequence is that of 4-hydroxythreonine-4-phosphate dehydrogenase from Helicobacter pylori (strain Shi470).